A 341-amino-acid chain; its full sequence is Tyrosine recombinase XerC (341 aa).

The Core-binding (CB) domain maps to 14-105 (PDAAEALERW…GVRSFFRWAD (92 aa)). Residues 126 to 309 (PLPRPLAADD…DAEHLLSVYE (184 aa)) enclose the Tyr recombinase domain. Catalysis depends on residues arginine 169, lysine 193, histidine 261, arginine 264, and histidine 287. Tyrosine 296 serves as the catalytic O-(3'-phospho-DNA)-tyrosine intermediate.

Belongs to the 'phage' integrase family. XerC subfamily. Forms a cyclic heterotetrameric complex composed of two molecules of XerC and two molecules of XerD.

The protein resides in the cytoplasm. In terms of biological role, site-specific tyrosine recombinase, which acts by catalyzing the cutting and rejoining of the recombining DNA molecules. The XerC-XerD complex is essential to convert dimers of the bacterial chromosome into monomers to permit their segregation at cell division. It also contributes to the segregational stability of plasmids. The polypeptide is Tyrosine recombinase XerC (Rhodospirillum centenum (strain ATCC 51521 / SW)).